A 364-amino-acid chain; its full sequence is Putative glutamate--cysteine ligase 2-2 (364 aa).

This sequence belongs to the glutamate--cysteine ligase type 2 family. YbdK subfamily.

It catalyses the reaction L-cysteine + L-glutamate + ATP = gamma-L-glutamyl-L-cysteine + ADP + phosphate + H(+). In terms of biological role, ATP-dependent carboxylate-amine ligase which exhibits weak glutamate--cysteine ligase activity. The polypeptide is Putative glutamate--cysteine ligase 2-2 (Mycobacterium sp. (strain JLS)).